Here is a 5801-residue protein sequence, read N- to C-terminus: uncharacterized protein (5801 aa).

7 disordered regions span residues 1114–1136, 1827–1846, 2040–2109, 3351–3392, 5134–5168, 5478–5573, and 5600–5638; these read DDDN…NKKI, KDRS…SINN, NNGE…SPLF, EKSN…NNSG, DNNN…SESD, ISDP…EDII, and HDKD…ETPG. Composition is skewed to low complexity over residues 1118–1134, 1831–1846, 2048–2096, 3353–3392, and 5135–5153; these read NNSN…NNNK, SSSS…SINN, QQLQ…QQQQ, SNNN…NNSG, and NNNN…NNNN. Residues 5496 to 5573 show a composition bias toward acidic residues; that stretch reads DNEEEEEDDD…EDEDEDEDII (78 aa). The span at 5617-5629 shows a compositional bias: basic and acidic residues; it reads QQPEKPQQPEKPQ.

This is an uncharacterized protein from Dictyostelium discoideum (Social amoeba).